A 617-amino-acid polypeptide reads, in one-letter code: Autophagy-related protein 20 (617 aa).

The interval 1-83 (MWNDEDNNPY…KRKPGGYDSR (83 aa)) is disordered. The segment covering 20–31 (QSSSINPTSPST) has biased composition (low complexity). Residues 48 to 58 (DNEHNHGVIHD) are compositionally biased toward basic and acidic residues. Positions 59–68 (DSDDDDEDLT) are enriched in acidic residues. Residues 89–209 (YENPKLSILI…RFFDPNASWS (121 aa)) enclose the PX domain. Residues R126, S128, K152, and R175 each contribute to the a 1,2-diacyl-sn-glycero-3-phospho-(1D-myo-inositol-3-phosphate) site. Residues 403-440 (QQDLTTEELSKKRALLDQLEQSEAEARRIENYLSSSQQ) are a coiled coil. Residues 434-516 (YLSSSQQISP…SGNSITNKIF (83 aa)) form a disordered region. The segment covering 454 to 463 (PPSHQRRDGS) has biased composition (basic and acidic residues). The segment covering 480 to 500 (DFSSHTPSASQGLPERSTSVP) has biased composition (polar residues).

Belongs to the sorting nexin family. As to quaternary structure, forms a complex with SNX4/ATG24 and ATG17.

Its subcellular location is the endosome membrane. It localises to the preautophagosomal structure membrane. In terms of biological role, required for cytoplasm to vacuole transport (Cvt), pexophagy and mitophagy. Also involved in endoplasmic reticulum-specific autophagic process and is essential for the survival of cells subjected to severe ER stress. Functions in protein retrieval from the endocytic pathway. Required for proper sorting of the v-SNARE protein SNC1. Autophagy is required for proper vegetative growth, asexual/sexual reproduction, and full virulence. Autophagy is particularly involved in the biosynthesis of deoxynivalenol (DON), an important virulence determinant. This Gibberella zeae (strain ATCC MYA-4620 / CBS 123657 / FGSC 9075 / NRRL 31084 / PH-1) (Wheat head blight fungus) protein is Autophagy-related protein 20.